The chain runs to 344 residues: Phenylalanine--tRNA ligase alpha subunit (344 aa).

Residue glutamate 255 participates in Mg(2+) binding.

The protein belongs to the class-II aminoacyl-tRNA synthetase family. Phe-tRNA synthetase alpha subunit type 1 subfamily. Tetramer of two alpha and two beta subunits. Mg(2+) serves as cofactor.

The protein localises to the cytoplasm. It catalyses the reaction tRNA(Phe) + L-phenylalanine + ATP = L-phenylalanyl-tRNA(Phe) + AMP + diphosphate + H(+). The protein is Phenylalanine--tRNA ligase alpha subunit of Cytophaga hutchinsonii (strain ATCC 33406 / DSM 1761 / CIP 103989 / NBRC 15051 / NCIMB 9469 / D465).